The following is a 49-amino-acid chain: Defensin Tk-AMP-D2 (49 aa).

4 cysteine pairs are disulfide-bonded: C3-C49, C14-C34, C20-C43, and C24-C45.

Functionally, plant defense peptide. This chain is Defensin Tk-AMP-D2, found in Triticum kiharae (Wheat).